The sequence spans 339 residues: Sulfate/thiosulfate import ATP-binding protein CysA (339 aa).

Residues 3–237 form the ABC transporter domain; sequence IAIRSVEKQF…PETAFVCGFV (235 aa). 35–42 serves as a coordination point for ATP; that stretch reads GPSGSGKT.

The protein belongs to the ABC transporter superfamily. Sulfate/tungstate importer (TC 3.A.1.6) family. In terms of assembly, the complex is composed of two ATP-binding proteins (CysA), two transmembrane proteins (CysT and CysW) and a solute-binding protein (CysP).

It localises to the cell inner membrane. The catalysed reaction is sulfate(out) + ATP + H2O = sulfate(in) + ADP + phosphate + H(+). The enzyme catalyses thiosulfate(out) + ATP + H2O = thiosulfate(in) + ADP + phosphate + H(+). Functionally, part of the ABC transporter complex CysAWTP involved in sulfate/thiosulfate import. Responsible for energy coupling to the transport system. This chain is Sulfate/thiosulfate import ATP-binding protein CysA, found in Caulobacter vibrioides (strain ATCC 19089 / CIP 103742 / CB 15) (Caulobacter crescentus).